We begin with the raw amino-acid sequence, 1548 residues long: Nuclear factor of activated T-cells 5 (1548 aa).

A disordered region spans residues 54-106 (QLPPPRETSAASMSQTSGGEAGSPPPAVVAADASSAPSSSMGGACSSFTTSSS). The segment covering 81–106 (VVAADASSAPSSSMGGACSSFTTSSS) has biased composition (low complexity). S137 is modified (phosphoserine). K139 is modified (N6-acetyllysine). Residues 141–151 (LTGNTVQQHPS) are compositionally biased toward polar residues. 3 disordered regions span residues 141–180 (LTGNTVQQHPSTPKRHTVLYISPPPEDLLDNSRMSCQDEG), 192–237 (WMED…CEES), and 258–282 (TTDNKGNSKAGNGTLDSQKGTGVKK). Phosphoserine is present on S151. At T152 the chain carries Phosphothreonine; by CDK5. Position 172 is a phosphoserine (S172). The span at 196-209 (SPSNFSNMSTSSYN) shows a compositional bias: low complexity. The span at 217–229 (KSRKRNPKQRPGV) shows a compositional bias: basic residues. Over residues 258 to 277 (TTDNKGNSKAGNGTLDSQKG) the composition is skewed to polar residues. The RHD domain occupies 281–460 (KKSPMLCGQY…SPILCTQPAG (180 aa)). Residues 310–317 (RARYLTEG) mediate DNA binding. A Glycyl lysine isopeptide (Lys-Gly) (interchain with G-Cter in SUMO1); alternate cross-link involves residue K572. K572 participates in a covalent cross-link: Glycyl lysine isopeptide (Lys-Gly) (interchain with G-Cter in SUMO2); alternate. The residue at position 577 (S577) is a Phosphoserine. K619 is covalently cross-linked (Glycyl lysine isopeptide (Lys-Gly) (interchain with G-Cter in SUMO2)). 6 disordered regions span residues 659-682 (GNASFSSPSSSHLSPENENQQQLQ), 750-777 (TEAPQQQQSPLQEQAQIPSNIFPSPNSV), 851-892 (PGMF…QQQQ), 970-1010 (SPPA…GAQA), 1097-1127 (LSQETQGPMFHSANPIVHSQTSTASSEQLQP), and 1257-1388 (MQSN…QEQQ). Composition is skewed to low complexity over residues 662–672 (SFSSPSSSHLS) and 751–765 (EAPQQQQSPLQEQAQ). Composition is skewed to polar residues over residues 766–777 (IPSNIFPSPNSV), 851–860 (PGMFSSTESA), and 876–886 (VHQQTENTLSS). Positions 979-993 (TSTTTTPQVATPGST) are enriched in low complexity. Positions 1113–1127 (VHSQTSTASSEQLQP) are enriched in polar residues. A compositionally biased stretch (low complexity) spans 1264–1283 (QEQQQQQQQQQQQQQQQQQQ). Polar residues-rich tracts occupy residues 1284–1300 (SILFSNQNAMATMASQK) and 1308–1333 (FSPNQNPMASQEQQNQSIFHQQSNMA). Low complexity predominate over residues 1334-1348 (PMNQEQQPMQFQNQP). Residues 1349 to 1388 (TVSSLQNPGPTPSESPQTSLFHSSPQIQLVQGSPSSQEQQ) are compositionally biased toward polar residues.

In terms of assembly, homodimer when bound to DNA, completely encircles its DNA target. Interacts with CIDEC; this interaction is direct and retains NFAT5 in the cytoplasm. Does not bind with Fos and Jun transcription factors. Interacts with DDX5 and DDX17; this interaction leads to DDX5/DDX17 recruitment to LNC2 and S100A4 promoters and NFAT5-mediated DDX5/DDX17-enhanced transactivation. Post-translationally, phosphorylated. Phosphorylated at Thr-152 by CDK5 in response to osmotic stress; this phosphorylation mediates its rapid nuclear localization. Poly-ADP-ribosylated by PARP1 in response to DNA damage, promoting recruitment to sites of R-loop-associated DNA damage.

The protein resides in the nucleus. The protein localises to the cytoplasm. It localises to the chromosome. Functionally, transcription factor involved, among others, in the transcriptional regulation of osmoprotective and inflammatory genes. Binds the DNA consensus sequence 5'-[ACT][AG]TGGAAA[CAT]A[TA][ATC][CA][ATG][GT][GAC][CG][CT]-3'. Mediates the transcriptional response to hypertonicity. Positively regulates the transcription of LCN2 and S100A4 genes; optimal transactivation of these genes requires the presence of DDX5/DDX17. Also involved in the DNA damage response by preventing formation of R-loops; R-loops are composed of a DNA:RNA hybrid and the associated non-template single-stranded DNA. The protein is Nuclear factor of activated T-cells 5 (Nfat5) of Rattus norvegicus (Rat).